The sequence spans 294 residues: 2,4-diacetylphloroglucinol hydrolase (294 aa).

Residues histidine 129, glutamate 160, histidine 270, and glutamate 274 each contribute to the Zn(2+) site.

It belongs to the DAPG/phloretin hydrolase family. As to quaternary structure, homodimer. It depends on Zn(2+) as a cofactor.

It catalyses the reaction 2,4-diacetylphloroglucinol + H2O = 2-acetylphloroglucinol + acetate. Its activity is regulated as follows. Specifically and significantly activated by CoCl(2). Competitively inhibited by MAPG, but not by 2-hydroxy- and 4-hydroxyacetophenone. Functionally, hydrolase that specifically degrades the potent antimicrobial compound 2,4-diacetylphloroglucinol (DAPG) to equimolar amounts of mildly toxic monoacetylphloroglucinol (MAPG) and acetate. This chain is 2,4-diacetylphloroglucinol hydrolase, found in Pseudomonas sp.